Consider the following 360-residue polypeptide: Peptide chain release factor 1 (360 aa).

Residue Q237 is modified to N5-methylglutamine.

This sequence belongs to the prokaryotic/mitochondrial release factor family. Post-translationally, methylated by PrmC. Methylation increases the termination efficiency of RF1.

The protein resides in the cytoplasm. Functionally, peptide chain release factor 1 directs the termination of translation in response to the peptide chain termination codons UAG and UAA. The chain is Peptide chain release factor 1 from Pseudomonas putida (strain GB-1).